A 353-amino-acid polypeptide reads, in one-letter code: Trans-enoyl reductase eqxC (353 aa).

Position 45-48 (45-48) interacts with NADP(+); it reads VDTK. 131–138 provides a ligand contact to substrate; that stretch reads ISFMTTGL. NADP(+)-binding positions include 166–169, 189–192, tyrosine 207, and 254–255; these read SSAT, SPRN, and LE. Residue 275–279 participates in substrate binding; that stretch reads GPQML. An NADP(+)-binding site is contributed by 344–345; it reads IS.

This sequence belongs to the zinc-containing alcohol dehydrogenase family. Monomer.

It carries out the reaction L-serine + 7 malonyl-CoA + acetyl-CoA + 2 S-adenosyl-L-methionine + ATP + 8 NADPH + 11 H(+) = (5S)-3-[(2E,6R,8E,10E,12E)-2,6-dimethyltetradeca-2,8,10,12-tetraenoyl]-5-(hydroxymethyl)pyrrolidine-2,4-dione + AMP + 2 S-adenosyl-L-homocysteine + 7 CO2 + diphosphate + 8 NADP(+) + 8 CoA + 6 H2O. It participates in mycotoxin biosynthesis. Its function is as follows. Trans-enoyl reductase; part of the gene cluster that mediates the biosynthesis of equisetin, a trans-fused decalin-containing tetramic acid with antimicrobial activity. The PKS module of eqxS together with the enoylreductase eqxC catalyze the formation of the polyketide unit which is then conjugated to L-serine by the condensation domain of the eqxS NRPS module. Activity of the Dieckmann cyclase domain (RED) results in release of the Dieckmann product intermediate. Diels-Alderase eqx3 is involved in endo-selective Diels-Alder cycloaddition to form the decalin ring, leading to the production of N-desmethylequisetin also called trichosetin. Subsequent N-methylation is carried out by eqxD to give equisetin. This is Trans-enoyl reductase eqxC from Fusarium heterosporum.